The following is a 131-amino-acid chain: Small ribosomal subunit protein bS6 (131 aa).

Residues 98-131 (EASPMVKAKDERRERREDFANETSEETEAGDSEE) form a disordered region. The span at 104 to 116 (KAKDERRERREDF) shows a compositional bias: basic and acidic residues. Positions 120-131 (TSEETEAGDSEE) are enriched in acidic residues.

It belongs to the bacterial ribosomal protein bS6 family.

Binds together with bS18 to 16S ribosomal RNA. The sequence is that of Small ribosomal subunit protein bS6 from Edwardsiella ictaluri (strain 93-146).